The chain runs to 246 residues: Endonuclease V (246 aa).

Residues Asp-50 and Asp-120 each coordinate Mg(2+).

The protein belongs to the endonuclease V family. The cofactor is Mg(2+).

It localises to the cytoplasm. It carries out the reaction Endonucleolytic cleavage at apurinic or apyrimidinic sites to products with a 5'-phosphate.. Its function is as follows. DNA repair enzyme involved in the repair of deaminated bases. Selectively cleaves double-stranded DNA at the second phosphodiester bond 3' to a deoxyinosine leaving behind the intact lesion on the nicked DNA. The polypeptide is Endonuclease V (Gloeobacter violaceus (strain ATCC 29082 / PCC 7421)).